The chain runs to 226 residues: Phosphoribosylformylglycinamidine synthase subunit PurQ (226 aa).

The region spanning 2 to 226 (KFAVIQFPGS…LKNFLVTVKN (225 aa)) is the Glutamine amidotransferase type-1 domain. Cys-86 serves as the catalytic Nucleophile. Catalysis depends on residues His-195 and Glu-197.

As to quaternary structure, part of the FGAM synthase complex composed of 1 PurL, 1 PurQ and 2 PurS subunits.

The protein resides in the cytoplasm. It carries out the reaction N(2)-formyl-N(1)-(5-phospho-beta-D-ribosyl)glycinamide + L-glutamine + ATP + H2O = 2-formamido-N(1)-(5-O-phospho-beta-D-ribosyl)acetamidine + L-glutamate + ADP + phosphate + H(+). The enzyme catalyses L-glutamine + H2O = L-glutamate + NH4(+). It participates in purine metabolism; IMP biosynthesis via de novo pathway; 5-amino-1-(5-phospho-D-ribosyl)imidazole from N(2)-formyl-N(1)-(5-phospho-D-ribosyl)glycinamide: step 1/2. Functionally, part of the phosphoribosylformylglycinamidine synthase complex involved in the purines biosynthetic pathway. Catalyzes the ATP-dependent conversion of formylglycinamide ribonucleotide (FGAR) and glutamine to yield formylglycinamidine ribonucleotide (FGAM) and glutamate. The FGAM synthase complex is composed of three subunits. PurQ produces an ammonia molecule by converting glutamine to glutamate. PurL transfers the ammonia molecule to FGAR to form FGAM in an ATP-dependent manner. PurS interacts with PurQ and PurL and is thought to assist in the transfer of the ammonia molecule from PurQ to PurL. This Lactococcus lactis subsp. cremoris (Streptococcus cremoris) protein is Phosphoribosylformylglycinamidine synthase subunit PurQ.